The primary structure comprises 247 residues: 3-deoxy-manno-octulosonate cytidylyltransferase (247 aa).

This sequence belongs to the KdsB family.

It localises to the cytoplasm. The enzyme catalyses 3-deoxy-alpha-D-manno-oct-2-ulosonate + CTP = CMP-3-deoxy-beta-D-manno-octulosonate + diphosphate. It functions in the pathway nucleotide-sugar biosynthesis; CMP-3-deoxy-D-manno-octulosonate biosynthesis; CMP-3-deoxy-D-manno-octulosonate from 3-deoxy-D-manno-octulosonate and CTP: step 1/1. Its pathway is bacterial outer membrane biogenesis; lipopolysaccharide biosynthesis. Functionally, activates KDO (a required 8-carbon sugar) for incorporation into bacterial lipopolysaccharide in Gram-negative bacteria. This is 3-deoxy-manno-octulosonate cytidylyltransferase from Methylorubrum extorquens (strain CM4 / NCIMB 13688) (Methylobacterium extorquens).